Consider the following 78-residue polypeptide: Large ribosomal subunit protein bL28 (78 aa).

This sequence belongs to the bacterial ribosomal protein bL28 family.

In Dichelobacter nodosus (strain VCS1703A), this protein is Large ribosomal subunit protein bL28.